The following is a 359-amino-acid chain: Insulin gene enhancer protein ISL-2 (359 aa).

2 consecutive LIM zinc-binding domains span residues 25–86 (AMCV…RLFG) and 87–149 (IKCA…LLER). The disordered stretch occupies residues 151-191 (AAGSPRSPGPLPGARGLHLPDAGSGRQPALRPHVHKQTEKT). Residues Ser154 and Ser157 each carry the phosphoserine modification. A DNA-binding region (homeobox) is located at residues 191–250 (TTRVRTVLNEKQLHTLRTCYAANPRPDALMKEQLVEMTGLSPRVIRVWFQNKRCKDKKKS). The tract at residues 272 to 301 (GTPLVAGSPIRHENAVQGSAVEVQTYQPPW) is LIM-binding domain (LID). The residue at position 279 (Ser279) is a Phosphoserine. Positions 326–336 (ESGSLGNSSGS) are enriched in low complexity. Residues 326 to 359 (ESGSLGNSSGSDVTSLSSQLPDTPNSMVPSPVET) are disordered. A compositionally biased stretch (polar residues) spans 337 to 359 (DVTSLSSQLPDTPNSMVPSPVET).

In terms of assembly, interacts with LHX4.

The protein localises to the nucleus. Its function is as follows. Transcriptional factor that defines subclasses of motoneurons that segregate into columns in the spinal cord and select distinct axon pathways. The sequence is that of Insulin gene enhancer protein ISL-2 (ISL2) from Homo sapiens (Human).